A 209-amino-acid polypeptide reads, in one-letter code: Small ribosomal subunit protein uS3 (209 aa).

Positions 38 to 107 constitute a KH type-2 domain; it reads IRKVIKSKYA…RFIVNVEEIK (70 aa).

Belongs to the universal ribosomal protein uS3 family. Part of the 30S ribosomal subunit. Forms a tight complex with proteins S10 and S14.

Binds the lower part of the 30S subunit head. Binds mRNA in the 70S ribosome, positioning it for translation. This is Small ribosomal subunit protein uS3 from Thermosipho melanesiensis (strain DSM 12029 / CIP 104789 / BI429).